Consider the following 437-residue polypeptide: Ribosomal protein uS12 methylthiotransferase RimO (437 aa).

One can recognise an MTTase N-terminal domain in the interval 4–114 (PRISFVSLGC…VIEAVHTAIP (111 aa)). [4Fe-4S] cluster is bound by residues cysteine 13, cysteine 49, cysteine 78, cysteine 145, cysteine 149, and cysteine 152. One can recognise a Radical SAM core domain in the interval 131 to 369 (LTPRHYAYLK…MAKQQQISTH (239 aa)). A TRAM domain is found at 372 to 437 (KKKIGKRLQV…DAYDLYGIAV (66 aa)).

It belongs to the methylthiotransferase family. RimO subfamily. The cofactor is [4Fe-4S] cluster.

It is found in the cytoplasm. The enzyme catalyses L-aspartate(89)-[ribosomal protein uS12]-hydrogen + (sulfur carrier)-SH + AH2 + 2 S-adenosyl-L-methionine = 3-methylsulfanyl-L-aspartate(89)-[ribosomal protein uS12]-hydrogen + (sulfur carrier)-H + 5'-deoxyadenosine + L-methionine + A + S-adenosyl-L-homocysteine + 2 H(+). Catalyzes the methylthiolation of an aspartic acid residue of ribosomal protein uS12. In Bartonella tribocorum (strain CIP 105476 / IBS 506), this protein is Ribosomal protein uS12 methylthiotransferase RimO.